We begin with the raw amino-acid sequence, 284 residues long: Undecaprenyl-diphosphatase (284 aa).

Helical transmembrane passes span 7 to 27 (IILG…TGHL), 44 to 64 (EMFD…LYFH), 90 to 110 (LWLK…PLND), 116 to 136 (FYHF…FIVI), 167 to 187 (VLSL…ALLI), 197 to 217 (FTFF…ILHF), 229 to 249 (FGVL…AIKF), and 259 to 279 (FTFF…YAAF).

It belongs to the UppP family.

It localises to the cell membrane. It catalyses the reaction di-trans,octa-cis-undecaprenyl diphosphate + H2O = di-trans,octa-cis-undecaprenyl phosphate + phosphate + H(+). In terms of biological role, catalyzes the dephosphorylation of undecaprenyl diphosphate (UPP). Confers resistance to bacitracin. This chain is Undecaprenyl-diphosphatase, found in Lactococcus lactis subsp. cremoris (strain MG1363).